The following is a 181-amino-acid chain: Ribosome maturation factor RimM (181 aa).

Residues 98-177 form the PRC barrel domain; it reads EGEFFYCDLV…KITTHNAKTL (80 aa).

This sequence belongs to the RimM family. Binds ribosomal protein uS19.

The protein localises to the cytoplasm. An accessory protein needed during the final step in the assembly of 30S ribosomal subunit, possibly for assembly of the head region. Essential for efficient processing of 16S rRNA. May be needed both before and after RbfA during the maturation of 16S rRNA. It has affinity for free ribosomal 30S subunits but not for 70S ribosomes. This Helicobacter pylori (strain HPAG1) protein is Ribosome maturation factor RimM.